We begin with the raw amino-acid sequence, 420 residues long: Tyrosine--tRNA ligase (420 aa).

An L-tyrosine-binding site is contributed by Y38. Residues P43–H52 carry the 'HIGH' region motif. L-tyrosine-binding residues include Y169 and Q173. Positions K231–S235 match the 'KMSKS' region motif. K234 is a binding site for ATP. Residues K353–I419 enclose the S4 RNA-binding domain.

Belongs to the class-I aminoacyl-tRNA synthetase family. TyrS type 1 subfamily. In terms of assembly, homodimer.

It is found in the cytoplasm. It carries out the reaction tRNA(Tyr) + L-tyrosine + ATP = L-tyrosyl-tRNA(Tyr) + AMP + diphosphate + H(+). In terms of biological role, catalyzes the attachment of tyrosine to tRNA(Tyr) in a two-step reaction: tyrosine is first activated by ATP to form Tyr-AMP and then transferred to the acceptor end of tRNA(Tyr). The chain is Tyrosine--tRNA ligase from Lactobacillus helveticus (strain DPC 4571).